The sequence spans 81 residues: Cytochrome c oxidase subunit 7B2, mitochondrial (81 aa).

Residues 1-25 constitute a mitochondrion transit peptide; it reads MMFPLARNALSSLKIQSILQSMARH. Residues 26-33 are Mitochondrial matrix-facing; it reads SHVKHSPD. Residues 34-60 traverse the membrane as a helical segment; sequence FHDKYGNAVLASGTAFCVATWVFTATQ. Residues 61–81 are Mitochondrial intermembrane-facing; sequence IGIEWNLSPVGRVTPKEWKHQ.

The protein belongs to the cytochrome c oxidase VIIb family. As to quaternary structure, component of the cytochrome c oxidase (complex IV, CIV), a multisubunit enzyme composed of 14 subunits. The complex is composed of a catalytic core of 3 subunits MT-CO1, MT-CO2 and MT-CO3, encoded in the mitochondrial DNA, and 11 supernumerary subunits COX4I, COX5A, COX5B, COX6A, COX6B, COX6C, COX7A, COX7B, COX7C, COX8 and NDUFA4, which are encoded in the nuclear genome. The complex exists as a monomer or a dimer and forms supercomplexes (SCs) in the inner mitochondrial membrane with NADH-ubiquinone oxidoreductase (complex I, CI) and ubiquinol-cytochrome c oxidoreductase (cytochrome b-c1 complex, complex III, CIII), resulting in different assemblies (supercomplex SCI(1)III(2)IV(1) and megacomplex MCI(2)III(2)IV(2)).

The protein localises to the mitochondrion inner membrane. Its pathway is energy metabolism; oxidative phosphorylation. In terms of biological role, component of the cytochrome c oxidase, the last enzyme in the mitochondrial electron transport chain which drives oxidative phosphorylation. The respiratory chain contains 3 multisubunit complexes succinate dehydrogenase (complex II, CII), ubiquinol-cytochrome c oxidoreductase (cytochrome b-c1 complex, complex III, CIII) and cytochrome c oxidase (complex IV, CIV), that cooperate to transfer electrons derived from NADH and succinate to molecular oxygen, creating an electrochemical gradient over the inner membrane that drives transmembrane transport and the ATP synthase. Cytochrome c oxidase is the component of the respiratory chain that catalyzes the reduction of oxygen to water. Electrons originating from reduced cytochrome c in the intermembrane space (IMS) are transferred via the dinuclear copper A center (CU(A)) of subunit 2 and heme A of subunit 1 to the active site in subunit 1, a binuclear center (BNC) formed by heme A3 and copper B (CU(B)). The BNC reduces molecular oxygen to 2 water molecules using 4 electrons from cytochrome c in the IMS and 4 protons from the mitochondrial matrix. The protein is Cytochrome c oxidase subunit 7B2, mitochondrial (COX7B2) of Homo sapiens (Human).